A 476-amino-acid polypeptide reads, in one-letter code: Bifunctional protein HldE (476 aa).

The tract at residues 1-319 (MKVSLPAFEK…EALALHHGES (319 aa)) is ribokinase. Residue 195–198 (NMSE) participates in ATP binding. Aspartate 264 is an active-site residue. Residues 345–476 (MTNGCFDILH…AIIQNIMANQ (132 aa)) form a cytidylyltransferase region.

It in the N-terminal section; belongs to the carbohydrate kinase PfkB family. This sequence in the C-terminal section; belongs to the cytidylyltransferase family. As to quaternary structure, homodimer.

It catalyses the reaction D-glycero-beta-D-manno-heptose 7-phosphate + ATP = D-glycero-beta-D-manno-heptose 1,7-bisphosphate + ADP + H(+). The catalysed reaction is D-glycero-beta-D-manno-heptose 1-phosphate + ATP + H(+) = ADP-D-glycero-beta-D-manno-heptose + diphosphate. Its pathway is nucleotide-sugar biosynthesis; ADP-L-glycero-beta-D-manno-heptose biosynthesis; ADP-L-glycero-beta-D-manno-heptose from D-glycero-beta-D-manno-heptose 7-phosphate: step 1/4. It participates in nucleotide-sugar biosynthesis; ADP-L-glycero-beta-D-manno-heptose biosynthesis; ADP-L-glycero-beta-D-manno-heptose from D-glycero-beta-D-manno-heptose 7-phosphate: step 3/4. Functionally, catalyzes the phosphorylation of D-glycero-D-manno-heptose 7-phosphate at the C-1 position to selectively form D-glycero-beta-D-manno-heptose-1,7-bisphosphate. In terms of biological role, catalyzes the ADP transfer from ATP to D-glycero-beta-D-manno-heptose 1-phosphate, yielding ADP-D-glycero-beta-D-manno-heptose. This Shewanella baltica (strain OS185) protein is Bifunctional protein HldE.